Consider the following 341-residue polypeptide: Elongation factor Ts, mitochondrial 2 (341 aa).

The transit peptide at 1–17 (MLAARFASRAFPRTRLY) directs the protein to the mitochondrion.

This sequence belongs to the EF-Ts family.

The protein localises to the mitochondrion. Its function is as follows. Associates with the EF-Tu.GDP complex and induces the exchange of GDP to GTP. It remains bound to the aminoacyl-tRNA.EF-Tu.GTP complex up to the GTP hydrolysis stage on the ribosome. This is Elongation factor Ts, mitochondrial 2 from Postia placenta (strain ATCC 44394 / Madison 698-R) (Brown rot fungus).